The sequence spans 492 residues: Zn(2)-C6 fungal-type transcription factor (492 aa).

A DNA-binding region (zn(2)-C6 fungal-type) is located at residues 14-41 (CRRCKNRKIKCDEVHPRCGNCAKHGVPC). Residues 58–119 (TSTESVGAPT…QPSISSSTNT (62 aa)) are disordered. A compositionally biased stretch (low complexity) spans 78-95 (SAPRTPLTRPRAPSSPAR). Phosphothreonine is present on Thr-82. A phosphoserine mark is found at Ser-92 and Ser-102. Polar residues predominate over residues 107-119 (VYSQPSISSSTNT). Thr-217 bears the Phosphothreonine mark. Ser-305 bears the Phosphoserine mark.

In terms of assembly, interacts with HOG1. In terms of processing, phosphorylation at Thr-82, Ser-92, Ser-102, thr-117 and ser-305 by HOG1 is required for regulating expression of ergosterol biosynthesis genes.

It is found in the nucleus. In terms of biological role, transcription factor that targets gene promoters containing 2 conserved CGAA repeat sequences. Positively regulates the expression of ergosterol biosynthesis genes including CYP51A and CYP51B encoding the sterol 14-alpha demethylase, and ERG6A and ERG6B encoding the sterol 24-C-methyltransferase. The polypeptide is Zn(2)-C6 fungal-type transcription factor (Gibberella zeae (strain ATCC MYA-4620 / CBS 123657 / FGSC 9075 / NRRL 31084 / PH-1) (Wheat head blight fungus)).